Reading from the N-terminus, the 537-residue chain is Chaperonin GroEL 2 (537 aa).

ATP contacts are provided by residues T29 to P32, D86 to T90, G413, N477 to A479, and D493.

This sequence belongs to the chaperonin (HSP60) family. As to quaternary structure, forms a cylinder of 14 subunits composed of two heptameric rings stacked back-to-back. Interacts with the co-chaperonin GroES.

It is found in the cytoplasm. It catalyses the reaction ATP + H2O + a folded polypeptide = ADP + phosphate + an unfolded polypeptide.. Its function is as follows. Together with its co-chaperonin GroES, plays an essential role in assisting protein folding. The GroEL-GroES system forms a nano-cage that allows encapsulation of the non-native substrate proteins and provides a physical environment optimized to promote and accelerate protein folding. This is Chaperonin GroEL 2 from Thermobifida fusca (strain YX).